We begin with the raw amino-acid sequence, 296 residues long: uncharacterized protein (296 aa).

Helical transmembrane passes span 10–29, 36–58, 112–131, 188–210, 241–260, and 273–295; these read FSTL…FSLL, YIVL…YYIL, FFAL…MFVT, ILIF…LYLR, MMYG…SAYF, and MYIS…VTYI.

The protein localises to the cell membrane. This is an uncharacterized protein from Clostridium acetobutylicum (strain ATCC 824 / DSM 792 / JCM 1419 / IAM 19013 / LMG 5710 / NBRC 13948 / NRRL B-527 / VKM B-1787 / 2291 / W).